The primary structure comprises 494 residues: Alpha-amylase-related protein (494 aa).

The signal sequence occupies residues 1 to 20 (MIKFALALTLCLAGASLSLA). Glutamine 21 bears the Pyrrolidone carboxylic acid mark. A disulfide bridge links cysteine 48 with cysteine 104. Ca(2+) is bound by residues asparagine 118, glutamine 169, and aspartate 178. Residues cysteine 157 and cysteine 171 are joined by a disulfide bond. Arginine 206 lines the chloride pocket. Catalysis depends on aspartate 208, which acts as the Nucleophile. Ca(2+) is bound at residue histidine 212. Catalysis depends on glutamate 245, which acts as the Proton donor. The chloride site is built by asparagine 308 and arginine 343. Cystine bridges form between cysteine 376–cysteine 382, cysteine 418–cysteine 441, and cysteine 448–cysteine 460.

This sequence belongs to the glycosyl hydrolase 13 family. Monomer. It depends on Ca(2+) as a cofactor. The cofactor is chloride.

It localises to the secreted. The catalysed reaction is Endohydrolysis of (1-&gt;4)-alpha-D-glucosidic linkages in polysaccharides containing three or more (1-&gt;4)-alpha-linked D-glucose units.. In Drosophila lini (Fruit fly), this protein is Alpha-amylase-related protein (Amyrel).